Consider the following 123-residue polypeptide: CD59 glycoprotein (123 aa).

An N-terminal signal peptide occupies residues 1–25; sequence MGSKGGFILLWLLSILAVLCHLGHS. Positions 26–103 constitute a UPAR/Ly6 domain; that stretch reads LQCYNCINPA…LCNKSDATIS (78 aa). Disulfide bonds link cysteine 28–cysteine 51, cysteine 31–cysteine 38, cysteine 44–cysteine 65, cysteine 71–cysteine 89, and cysteine 90–cysteine 95. Asparagine 43 carries an N-linked (GlcNAc...) asparagine glycan. Serine 98 carries the GPI-anchor amidated serine lipid modification. The propeptide at 99 to 123 is removed in mature form; that stretch reads DATISSGKTALLVILLLVATWHFCL.

As to quaternary structure, interacts with T-cell surface antigen CD2. N- and O-glycosylated. Expressed in all tissues tested (lung, testis liver, kidney, spleen, heart and skeletal muscle). Highest levels in lung and spleen, lowest levels in liver and skeletal muscle.

The protein localises to the cell membrane. It localises to the secreted. Potent inhibitor of the complement membrane attack complex (MAC) action, which protects self-cells from damage during complement activation. Acts by binding to the beta-haipins of C8 (C8A and C8B) components of the assembling MAC, forming an intermolecular beta-sheet that prevents incorporation of the multiple copies of C9 required for complete formation of the osmolytic pore. This is CD59 glycoprotein from Sus scrofa (Pig).